A 426-amino-acid polypeptide reads, in one-letter code: Lipase 7 (426 aa).

Positions 1-15 are cleaved as a signal peptide; it reads MFVFLALITLTTCLQ. N-linked (GlcNAc...) asparagine glycans are attached at residues N74, N175, and N179. 2 disulfides stabilise this stretch: C108/C269 and C341/C385. The active-site Charge relay system is S190. N223 carries an N-linked (GlcNAc...) asparagine glycan. H358 (charge relay system) is an active-site residue. N-linked (GlcNAc...) asparagine glycans are attached at residues N378, N379, N422, and N423.

Belongs to the AB hydrolase superfamily. Lipase family. Class Lip subfamily.

The enzyme catalyses a triacylglycerol + H2O = a diacylglycerol + a fatty acid + H(+). In terms of biological role, secreted lipase that is able to hydrolze both the neutral triacylglycerols and the monopalmitate ester Tween 40, allowing the use of hydrolyzed products as carbon sources. Has broad lipolytic activity, which may be important for colonization and subsequent infection, therefore contributing to the persistence and virulence in human tissue. The polypeptide is Lipase 7 (Candida albicans (strain SC5314 / ATCC MYA-2876) (Yeast)).